A 338-amino-acid chain; its full sequence is DNA-directed RNA polymerase I subunit RPA43 (338 aa).

The interval 209 to 338 (EVSEEVTENG…PKRKGKSNFL (130 aa)) is disordered. Phosphoserine occurs at positions 242, 304, and 316. Residue T322 is modified to Phosphothreonine. S328 carries the post-translational modification Phosphoserine. Residues 328 to 338 (SPKRKGKSNFL) show a composition bias toward basic residues.

Belongs to the eukaryotic RPA43 RNA polymerase subunit family. Component of the RNA polymerase I (Pol I) complex consisting of 13 subunits: a ten-subunit catalytic core composed of POLR1A/RPA1, POLR1B/RPA2, POLR1C/RPAC1, POLR1D/RPAC2, POLR1H/RPA12, POLR2E/RPABC1, POLR2F/RPABC2, POLR2H/RPABC3, POLR2K/RPABC4 and POLR2L/RPABC5; a mobile stalk subunit POLR1F/RPA43 protruding from the core and additional subunits homologous to general transcription factors POLR1E/RPA49 and POLR1G/RPA34. Interacts with RRN3/TIF-IA. Widely expressed. Expressed in all fetal and adult tissues tested, with highest expression in fetal lung, liver, and kidney, and low expression in all adult tissues.

The protein localises to the nucleus. The protein resides in the nucleolus. Its function is as follows. Component of RNA polymerase I (Pol I), a DNA-dependent RNA polymerase which synthesizes ribosomal RNA precursors using the four ribonucleoside triphosphates as substrates. Through its association with RRN3/TIF-IA may be involved in recruitment of Pol I to rDNA promoters. The chain is DNA-directed RNA polymerase I subunit RPA43 from Homo sapiens (Human).